A 201-amino-acid chain; its full sequence is MAKVLYVKANPKNNEESRTFRISEHFINEYKKAHPEDEIIELDLYKENIHFLSKEEINTIMSKDKSNLKDHPVLKYTYQFAEADKYVIATPMWNLSIPAILKAYFDYITVTGITFKYTENGAVGLLKNKKAVVIMSTGGEYLTPPFDQWNFASTYVTTMFKFFGVEDVSLIAAQRLDIIGEDVEKRVSDAMKEAEQLAKQF.

FMN contacts are provided by residues 92–95 and 136–139; these read MWNL and STGG.

This sequence belongs to the azoreductase type 1 family. Homodimer. It depends on FMN as a cofactor.

It carries out the reaction 2 a quinone + NADH + H(+) = 2 a 1,4-benzosemiquinone + NAD(+). The enzyme catalyses N,N-dimethyl-1,4-phenylenediamine + anthranilate + 2 NAD(+) = 2-(4-dimethylaminophenyl)diazenylbenzoate + 2 NADH + 2 H(+). Its function is as follows. Quinone reductase that provides resistance to thiol-specific stress caused by electrophilic quinones. Functionally, also exhibits azoreductase activity. Catalyzes the reductive cleavage of the azo bond in aromatic azo compounds to the corresponding amines. This Coprothermobacter proteolyticus (strain ATCC 35245 / DSM 5265 / OCM 4 / BT) protein is FMN-dependent NADH:quinone oxidoreductase.